Consider the following 391-residue polypeptide: S-adenosylmethionine synthase (391 aa).

H16 is an ATP binding site. D18 provides a ligand contact to Mg(2+). K(+) is bound at residue E44. Positions 57 and 101 each coordinate L-methionine. The tract at residues Q101–A111 is flexible loop. ATP contacts are provided by residues D166–K168, D244, R250–K251, A267, and K271. D244 provides a ligand contact to L-methionine. Residue K275 participates in L-methionine binding.

Belongs to the AdoMet synthase family. As to quaternary structure, homotetramer; dimer of dimers. It depends on Mg(2+) as a cofactor. K(+) is required as a cofactor.

Its subcellular location is the cytoplasm. The catalysed reaction is L-methionine + ATP + H2O = S-adenosyl-L-methionine + phosphate + diphosphate. Its pathway is amino-acid biosynthesis; S-adenosyl-L-methionine biosynthesis; S-adenosyl-L-methionine from L-methionine: step 1/1. In terms of biological role, catalyzes the formation of S-adenosylmethionine (AdoMet) from methionine and ATP. The overall synthetic reaction is composed of two sequential steps, AdoMet formation and the subsequent tripolyphosphate hydrolysis which occurs prior to release of AdoMet from the enzyme. The polypeptide is S-adenosylmethionine synthase (Zymomonas mobilis subsp. mobilis (strain ATCC 31821 / ZM4 / CP4)).